The following is a 117-amino-acid chain: Large ribosomal subunit protein bL20c (117 aa).

It belongs to the bacterial ribosomal protein bL20 family.

It is found in the plastid. It localises to the chloroplast. In terms of biological role, binds directly to 23S ribosomal RNA and is necessary for the in vitro assembly process of the 50S ribosomal subunit. It is not involved in the protein synthesizing functions of that subunit. This chain is Large ribosomal subunit protein bL20c, found in Lemna minor (Common duckweed).